Here is a 288-residue protein sequence, read N- to C-terminus: Bifunctional protein FolD (288 aa).

NADP(+)-binding positions include glycine 165–serine 167, serine 190, and isoleucine 231.

It belongs to the tetrahydrofolate dehydrogenase/cyclohydrolase family. Homodimer.

It carries out the reaction (6R)-5,10-methylene-5,6,7,8-tetrahydrofolate + NADP(+) = (6R)-5,10-methenyltetrahydrofolate + NADPH. The enzyme catalyses (6R)-5,10-methenyltetrahydrofolate + H2O = (6R)-10-formyltetrahydrofolate + H(+). Its pathway is one-carbon metabolism; tetrahydrofolate interconversion. Catalyzes the oxidation of 5,10-methylenetetrahydrofolate to 5,10-methenyltetrahydrofolate and then the hydrolysis of 5,10-methenyltetrahydrofolate to 10-formyltetrahydrofolate. The sequence is that of Bifunctional protein FolD from Nitrosospira multiformis (strain ATCC 25196 / NCIMB 11849 / C 71).